The chain runs to 122 residues: Lysozyme (122 aa).

The region spanning 3-118 (GGIVSQRCLS…WNRLQKISGC (116 aa)) is the I-type lysozyme domain. Intrachain disulfides connect Cys-10/Cys-86, Cys-13/Cys-118, Cys-15/Cys-21, Cys-26/Cys-35, Cys-48/Cys-68, Cys-58/Cys-64, and Cys-82/Cys-100. The Proton donor role is filled by Glu-18. Catalysis depends on Asp-29, which acts as the Nucleophile. 41–47 (KEAYWID) lines the substrate pocket. Residues Tyr-72, His-93, 93–95 (HNG), and Lys-102 each bind substrate.

This sequence belongs to the glycosyl hydrolase 22 family. Type-I lysozyme subfamily. As to quaternary structure, monomer.

Its subcellular location is the secreted. The catalysed reaction is Hydrolysis of (1-&gt;4)-beta-linkages between N-acetylmuramic acid and N-acetyl-D-glucosamine residues in a peptidoglycan and between N-acetyl-D-glucosamine residues in chitodextrins.. Functionally, has bacteriolytic activity against Gram-positive bacteria M.luteus. Also has chitinase activity. This chain is Lysozyme, found in Meretrix lusoria (Hard clam).